We begin with the raw amino-acid sequence, 220 residues long: Thiopurine S-methyltransferase (220 aa).

S-adenosyl-L-methionine contacts are provided by Trp-10, Leu-45, Glu-66, and Arg-123.

It belongs to the class I-like SAM-binding methyltransferase superfamily. TPMT family.

The protein localises to the cytoplasm. The enzyme catalyses S-adenosyl-L-methionine + a thiopurine = S-adenosyl-L-homocysteine + a thiopurine S-methylether.. This is Thiopurine S-methyltransferase from Pseudomonas syringae pv. syringae (strain B728a).